Consider the following 461-residue polypeptide: Cysteine--tRNA ligase (461 aa).

Cys28 is a Zn(2+) binding site. The 'HIGH' region motif lies at 30-40; sequence ITVYDLCHIGH. Zn(2+)-binding residues include Cys209, His234, and Glu238. A 'KMSKS' region motif is present at residues 266–270; sequence KMSKS. Lys269 serves as a coordination point for ATP.

Belongs to the class-I aminoacyl-tRNA synthetase family. In terms of assembly, monomer. Zn(2+) is required as a cofactor.

It is found in the cytoplasm. It catalyses the reaction tRNA(Cys) + L-cysteine + ATP = L-cysteinyl-tRNA(Cys) + AMP + diphosphate. This is Cysteine--tRNA ligase from Escherichia coli (strain K12 / MC4100 / BW2952).